We begin with the raw amino-acid sequence, 153 residues long: MVVKAVCVINGDAKGTVFFEQESSETPVKVSGEVCGLAKGLHGFHVHEFGDNTNGCMSSGPHFNPYGKEHGAPVDENRHLGDLGNIEATGDCPTKVSITDSRITLFGADSIIGRTVVVHADADDLGKGGHELSKSTGNAGARIGCGVIGIAKV.

Cu cation contacts are provided by His-45, His-47, and His-62. A disulfide bond links Cys-56 and Cys-145. Zn(2+) is bound by residues His-62, His-70, His-79, and Asp-82. His-119 is a Cu cation binding site.

This sequence belongs to the Cu-Zn superoxide dismutase family. Homodimer. Cu cation is required as a cofactor. Zn(2+) serves as cofactor.

It localises to the cytoplasm. It carries out the reaction 2 superoxide + 2 H(+) = H2O2 + O2. Functionally, destroys radicals which are normally produced within the cells and which are toxic to biological systems. In Drosophila orena (Fruit fly), this protein is Superoxide dismutase [Cu-Zn].